The primary structure comprises 299 residues: Syntenin-1 (299 aa).

Serine 2 bears the N-acetylserine mark. The tract at residues 2–103 (SLYPSLEDLK…VAPVTGNDAG (102 aa)) is interaction with PDCD6IP. 3 short sequence motifs (LYPX(n)L motif) span residues 3–7 (LYPSL), 46–50 (LYPKL), and 50–54 (LYPEL). Serine 6 is subject to Phosphoserine. Tyrosine 47 is subject to Phosphotyrosine. 2 PDZ domains span residues 115 to 194 (EVIL…IRDR) and 199 to 273 (TVTM…IMPT). 251-252 (KD) provides a ligand contact to a 1,2-diacyl-sn-glycero-3-phospho-(1D-myo-inositol-4,5-bisphosphate).

As to quaternary structure, monomer and homodimer. Interacts with SDC1, SDC2, SDC3, SDC4, NRXN2, EPHA7, EPHB1, NF2 isoform 1, TGFA, IL5RA, NFASC, SDCBP2 and PTPRJ. Interacts with PDCD6IP. Forms a complex with PDCD6IP and SDC2. Interacts (via C-terminus) with TGFBR1. Binds to FZD7; this interaction is increased by inositol trisphosphate (IP3). Interacts with SMO. Phosphorylated on tyrosine residues.

The protein localises to the cell junction. It localises to the focal adhesion. It is found in the adherens junction. Its subcellular location is the cell membrane. The protein resides in the endoplasmic reticulum membrane. The protein localises to the nucleus. It localises to the melanosome. It is found in the cytoplasm. Its subcellular location is the cytosol. The protein resides in the cytoskeleton. The protein localises to the secreted. It localises to the extracellular exosome. It is found in the membrane raft. In terms of biological role, multifunctional adapter protein involved in diverse array of functions including trafficking of transmembrane proteins, neuro and immunomodulation, exosome biogenesis, and tumorigenesis. Positively regulates TGFB1-mediated SMAD2/3 activation and TGFB1-induced epithelial-to-mesenchymal transition (EMT) and cell migration in various cell types. May increase TGFB1 signaling by enhancing cell-surface expression of TGFR1 by preventing the interaction between TGFR1 and CAV1 and subsequent CAV1-dependent internalization and degradation of TGFR1. In concert with SDC1/4 and PDCD6IP, regulates exosome biogenesis. Regulates migration, growth, proliferation, and cell cycle progression in a variety of cancer types. In adherens junctions may function to couple syndecans to cytoskeletal proteins or signaling components. Seems to couple transcription factor SOX4 to the IL-5 receptor (IL5RA). May also play a role in vesicular trafficking. Seems to be required for the targeting of TGFA to the cell surface in the early secretory pathway. The protein is Syntenin-1 (Sdcbp) of Mus musculus (Mouse).